Reading from the N-terminus, the 263-residue chain is Tryptophan synthase alpha chain (263 aa).

Catalysis depends on proton acceptor residues Glu47 and Asp58.

Belongs to the TrpA family. In terms of assembly, tetramer of two alpha and two beta chains.

It localises to the plastid. The protein localises to the chloroplast. It carries out the reaction (1S,2R)-1-C-(indol-3-yl)glycerol 3-phosphate + L-serine = D-glyceraldehyde 3-phosphate + L-tryptophan + H2O. It functions in the pathway amino-acid biosynthesis; L-tryptophan biosynthesis; L-tryptophan from chorismate: step 5/5. In terms of biological role, the alpha subunit is responsible for the aldol cleavage of indoleglycerol phosphate to indole and glyceraldehyde 3-phosphate. The protein is Tryptophan synthase alpha chain of Antithamnion sp. (Red alga).